Consider the following 143-residue polypeptide: Glutamyl-tRNA(Gln) amidotransferase subunit C, chloroplastic/mitochondrial (143 aa).

It belongs to the GatC family. In terms of assembly, subunit of the heterotrimeric GatCAB amidotransferase (AdT) complex, composed of A, B and C subunits.

The protein resides in the mitochondrion. The protein localises to the plastid. It is found in the chloroplast. It carries out the reaction L-glutamyl-tRNA(Gln) + L-glutamine + ATP + H2O = L-glutaminyl-tRNA(Gln) + L-glutamate + ADP + phosphate + H(+). Functionally, allows the formation of correctly charged Gln-tRNA(Gln) through the transamidation of misacylated Glu-tRNA(Gln) in chloroplasts and mitochondria. The reaction takes place in the presence of glutamine and ATP through an activated gamma-phospho-Glu-tRNA(Gln). The sequence is that of Glutamyl-tRNA(Gln) amidotransferase subunit C, chloroplastic/mitochondrial from Ricinus communis (Castor bean).